The primary structure comprises 398 residues: 1-deoxy-D-xylulose 5-phosphate reductoisomerase (398 aa).

5 residues coordinate NADPH: Thr-11, Gly-12, Ser-13, Ile-14, and Asn-125. Lys-126 lines the 1-deoxy-D-xylulose 5-phosphate pocket. Glu-127 lines the NADPH pocket. Asp-151 contacts Mn(2+). Positions 152, 153, 186, and 209 each coordinate 1-deoxy-D-xylulose 5-phosphate. Mn(2+) is bound at residue Glu-153. Residue Gly-215 participates in NADPH binding. Ser-222, Asn-227, Lys-228, and Glu-231 together coordinate 1-deoxy-D-xylulose 5-phosphate. Mn(2+) is bound at residue Glu-231.

This sequence belongs to the DXR family. The cofactor is Mg(2+). Requires Mn(2+) as cofactor.

The catalysed reaction is 2-C-methyl-D-erythritol 4-phosphate + NADP(+) = 1-deoxy-D-xylulose 5-phosphate + NADPH + H(+). It participates in isoprenoid biosynthesis; isopentenyl diphosphate biosynthesis via DXP pathway; isopentenyl diphosphate from 1-deoxy-D-xylulose 5-phosphate: step 1/6. Catalyzes the NADPH-dependent rearrangement and reduction of 1-deoxy-D-xylulose-5-phosphate (DXP) to 2-C-methyl-D-erythritol 4-phosphate (MEP). The polypeptide is 1-deoxy-D-xylulose 5-phosphate reductoisomerase (Acinetobacter baylyi (strain ATCC 33305 / BD413 / ADP1)).